A 145-amino-acid chain; its full sequence is MRPDVFVLFTAFLGPAAAYRRTCSHTGKGEGWYIIRRGDNFNAVAADFCTSTNVLTEWNHISTITDNMVNTKIKVPCRWNAGKQRDCLKDQKSSNGWYHIVSGDELKDIAYDFCTTSGSLAGMNGISNPDYIKANTDIVVPCSWN.

The signal sequence occupies residues 1 to 18 (MRPDVFVLFTAFLGPAAA). LysM domains are found at residues 31 to 75 (GWYI…KIKV) and 96 to 140 (GWYH…DIVV).

The protein belongs to the secreted LysM effector family. As to quaternary structure, forms homodimers in a chitin-independent manner through interactions at the N-termini of EPL2 monomers. Homodimers are further polymerized in a chitin-dependent manner.

In terms of biological role, secreted effector that enables the plant pathogenic fungus to manipulate host defenses for successful infection. Binds chitin, suppresses chitin-induced immune responses and protects hyphae against degradation by plant hydrolytic enzymes. Chitin-induced polymerization of homodimers forms a contiguous ELP2 highly oligomeric super-complexe that may precipitate at infection sites to eliminate chitin oligomers, and thus suppress the activation of chitin-induced plant immunity. The sequence is that of Secreted LysM effector Vd2LysM from Verticillium dahliae (strain VdLs.17 / ATCC MYA-4575 / FGSC 10137) (Verticillium wilt).